The sequence spans 735 residues: Protostadienol synthase helA (735 aa).

One copy of the PFTB 1 repeat lies at 132-173 (KQEMCRYLLNVVNEDGGWGLFIQSPSTVFGTVMNYCMLRILG). Asp463 functions as the Proton donor in the catalytic mechanism. 3 PFTB repeats span residues 490-531 (LQQA…YENV), 567-607 (LSRS…ACMG), and 616-663 (CQRA…AVIG).

Belongs to the terpene cyclase/mutase family.

The enzyme catalyses (S)-2,3-epoxysqualene = (17Z)-protosta-17(20),24-dien-3beta-ol. The protein operates within mycotoxin biosynthesis. Its function is as follows. Protostadienol synthase; part of the gene cluster that mediates the biosynthesis of helvolic acid, an antibacterial nortriterpenoid. Protostadienol synthase helA cyclizes (3S)-oxidosqualene to (17Z)-protosta-17(20),24-dien-3-beta-ol (protostadienol). The synthesis of protostadienol is followed by several steps of monooxygenation, dehydrogenation, and acyl transfer to yield the final helvolic acid. Following the cyclization to the tetracyclic protostadienol by helA, cytochrome P450 monooxygenases helB1-mediated and helB2-mediated oxidation at C-4 and C-16, acyltransferase helD2-dependent acetylation of 16-OH, oxidation of C-21 by cytochrome P450 monooxygenase helB4, and short chain dehydrogenase helC-dependent oxidative decarboxylation yield the fusidane skeleton. This intermediate is further modified in three additional steps mediated by the cytochrome P450 monooxygenase helB3, the acyltransferase helD1, and the 3-ketosteroid 1-dehydrogenase helE to give helvolic acid. Compared with the late stages in the biosynthesis of helvolic acid, enzymes involved in the early stage modifications act in a relatively strict order. The hydroxylation of C-16 by helB1 and subsequent acetylation by helD2 should occur before the helB3-mediated oxidation of C-21. C-4 demethylation in fusidane-type antibiotics proceeds in an unusual manner though it is also achieved by oxidative decarboxylation. The methyl group at C-4 beta position is oxidized by helB1 and subsequently removed by the short chain dehydrogenase helC. The protein is Protostadienol synthase helA of Aspergillus fumigatus (strain ATCC MYA-4609 / CBS 101355 / FGSC A1100 / Af293) (Neosartorya fumigata).